The sequence spans 140 residues: Desampylase (140 aa).

Residues 13-133 enclose the MPN domain; it reads TLIIPQHYLR…WILSEKNKIS (121 aa). Residue glutamate 34 is the Proton donor/acceptor of the active site. Residues histidine 88, histidine 90, and aspartate 101 each contribute to the Zn(2+) site. A JAMM motif motif is present at residues 88-101; sequence HSHIACPPIPSGKD.

This sequence belongs to the peptidase M67B family. As to quaternary structure, exists in two major states: monomer and homodimer. Both conformational states are catalytically active. The cofactor is Zn(2+). In terms of processing, the disulfide bridge probably stabilizes the PfJAMM1 homodimer at the optimal growth temperature of the hyperthermophile.

The catalysed reaction is an N(6)-[small archaeal modifier protein]-[protein]-L-lysine + H2O = a [protein]-L-lysine + a [small archaeal modifier protein].. Its activity is regulated as follows. Inhibited by EDTA in vitro. Metalloprotease that displays desampylase (DSAMP) activity, cleaving ubiquitin-like small archaeal modifier proteins (SAMP1, SAMP2 and SAMP3) from protein conjugates (isopeptide- and linear-linked). Thus, likely regulates sampylation and the pools of 'free' SAMP available for protein modification. In vitro, is also able to cleave non-physiological ubiquitin (Ub) substrates, such as 'Met1-', 'Lys48-', and 'Lys63'-linked Ub dimers (Ub2), and to remove Ub tags from diverse proteins. This Pyrococcus furiosus (strain ATCC 43587 / DSM 3638 / JCM 8422 / Vc1) protein is Desampylase.